We begin with the raw amino-acid sequence, 169 residues long: U3 small nucleolar ribonucleoprotein protein imp3 (169 aa).

Residues 109–166 enclose the S4 RNA-binding domain; the sequence is RRLPVVMCRLKMCETVSTSVKYVEHGHVRVGPEVITDPAFFVTRNMEDFVTWVDSSKI.

The protein belongs to the universal ribosomal protein uS4 family. In terms of assembly, component of a heterotrimeric complex containing imp3, imp4 and mpp10.

Its subcellular location is the nucleus. The protein localises to the nucleolus. Functionally, component of the U3 small nucleolar ribonucleoprotein. Required for the early cleavages at sites A0, A1 and A2 during 18S ribosomal pre-RNA processing. The sequence is that of U3 small nucleolar ribonucleoprotein protein imp3 (RBP) from Pneumocystis carinii.